The sequence spans 251 residues: Triosephosphate isomerase (251 aa).

12 to 14 (NWK) serves as a coordination point for substrate. His99 serves as the catalytic Electrophile. Glu169 functions as the Proton acceptor in the catalytic mechanism. Substrate is bound by residues Gly175, Ser214, and 235-236 (GG).

Belongs to the triosephosphate isomerase family. In terms of assembly, homodimer.

The protein resides in the cytoplasm. The catalysed reaction is D-glyceraldehyde 3-phosphate = dihydroxyacetone phosphate. It participates in carbohydrate biosynthesis; gluconeogenesis. It functions in the pathway carbohydrate degradation; glycolysis; D-glyceraldehyde 3-phosphate from glycerone phosphate: step 1/1. In terms of biological role, involved in the gluconeogenesis. Catalyzes stereospecifically the conversion of dihydroxyacetone phosphate (DHAP) to D-glyceraldehyde-3-phosphate (G3P). This Bradyrhizobium sp. (strain BTAi1 / ATCC BAA-1182) protein is Triosephosphate isomerase.